The sequence spans 181 residues: Ribulose bisphosphate carboxylase small subunit, chloroplastic 6 (181 aa).

A chloroplast-targeting transit peptide spans 1–57; that stretch reads MASSIVSSAAVATRSNVAQASMVAPFTGLKSAASFPVTKKNNNVDITSLASNGGRVR.

It belongs to the RuBisCO small chain family. As to quaternary structure, heterohexadecamer of 8 large and 8 small subunits.

The protein localises to the plastid. It is found in the chloroplast. RuBisCO catalyzes two reactions: the carboxylation of D-ribulose 1,5-bisphosphate, the primary event in carbon dioxide fixation, as well as the oxidative fragmentation of the pentose substrate. Both reactions occur simultaneously and in competition at the same active site. Although the small subunit is not catalytic it is essential for maximal activity. This Solanum tuberosum (Potato) protein is Ribulose bisphosphate carboxylase small subunit, chloroplastic 6.